An 86-amino-acid chain; its full sequence is Sodium channel neurotoxin MeuNaTxalpha-5 (86 aa).

An N-terminal signal peptide occupies residues 1–19 (MNYLILISFALLVITGVES). One can recognise an LCN-type CS-alpha/beta domain in the interval 21-85 (RDAYIAKPHN…VPIRIPGKCH (65 aa)). 4 disulfide bridges follow: cysteine 31/cysteine 84, cysteine 35/cysteine 57, cysteine 43/cysteine 67, and cysteine 47/cysteine 69. A propeptide (removed by a carboxypeptidase) is located at residue arginine 86.

Belongs to the long (4 C-C) scorpion toxin superfamily. Sodium channel inhibitor family. Alpha subfamily. As to expression, expressed by the venom gland.

Its subcellular location is the secreted. Alpha toxins bind voltage-independently at site-3 of sodium channels (Nav) and inhibit the inactivation of the activated channels, thereby blocking neuronal transmission. This toxin inhibits inactivation of Nav1.6/SCN8A (EC(50)=790 nM) and drosophila DmNav1 (EC(50)=280 nM). The toxin (1 uM) does not significantly shift the midpoint of activation at the two channels, but induces a significant depolarizing shift in the V(1/2) of inactivation of the channels. Has antimicrobial activity. The polypeptide is Sodium channel neurotoxin MeuNaTxalpha-5 (Mesobuthus eupeus (Lesser Asian scorpion)).